The following is a 337-amino-acid chain: Ornithine carbamoyltransferase (337 aa).

Carbamoyl phosphate is bound by residues 57 to 60 (STRT), glutamine 84, arginine 108, and 135 to 138 (HPTQ). Residues asparagine 167, aspartate 231, and 235–236 (SM) each bind L-ornithine. Residues 272-273 (CL) and arginine 317 each bind carbamoyl phosphate.

Belongs to the aspartate/ornithine carbamoyltransferase superfamily. OTCase family.

The protein resides in the cytoplasm. The enzyme catalyses carbamoyl phosphate + L-ornithine = L-citrulline + phosphate + H(+). It functions in the pathway amino-acid degradation; L-arginine degradation via ADI pathway; carbamoyl phosphate from L-arginine: step 2/2. Its function is as follows. Reversibly catalyzes the transfer of the carbamoyl group from carbamoyl phosphate (CP) to the N(epsilon) atom of ornithine (ORN) to produce L-citrulline. In Streptococcus equi subsp. equi (strain 4047), this protein is Ornithine carbamoyltransferase.